Reading from the N-terminus, the 327-residue chain is MKELFKRGGIMLFDKNILQKIDEELKTYVDKDDKLYNASKHLLFAGGKRIRPYLTVVTYMLKKDDIEEVLPAAAAVELIHNYTLIHDDIMDNDDERRGKPTVHVVYGEPMAILAGDLLYAKAFEAVSRIKDNKKAHEVLKILSKACVEVCEGQAMDMEFENYYPTMEEYLDMIRKKTGALLEASVGIGAVMADCNEEEREALKEYAKRIGLTFQIQDDVLDLIGDQKKLGKPVGSDIREGKKTIIVIHALKTLDEDKKKRLLEILGNKNVKDEEIKEAIEILKPSIEYAKELMKQKTEEAKEYLKIFNKDRRKVLEDLADFIMSRIY.

Residues K48, R51, and H80 each contribute to the isopentenyl diphosphate site. Mg(2+)-binding residues include D87 and D91. R96 is an an all-trans-polyprenyl diphosphate binding site. R97 is a binding site for isopentenyl diphosphate. Positions 176, 177, 214, 231, and 241 each coordinate an all-trans-polyprenyl diphosphate.

It belongs to the FPP/GGPP synthase family. In terms of assembly, homodimer. Mg(2+) is required as a cofactor.

The protein resides in the cytoplasm. In Methanocaldococcus jannaschii (strain ATCC 43067 / DSM 2661 / JAL-1 / JCM 10045 / NBRC 100440) (Methanococcus jannaschii), this protein is Short chain isoprenyl diphosphate synthase (idsA).